Here is an 899-residue protein sequence, read N- to C-terminus: Translation initiation factor IF-2 (899 aa).

Disordered regions lie at residues 115–137, 170–189, and 262–309; these read EAKARAEQQAREAAEQKARLQTE, RGGGTVKPAPKPAETLEQKK, and DREI…HGFE. Residues 399-568 form the tr-type G domain; sequence TRPPVVTIMG…LIQSELMELK (170 aa). Residues 408–415 are G1; it reads GHVDHGKT. 408 to 415 contributes to the GTP binding site; sequence GHVDHGKT. Positions 433–437 are G2; that stretch reads GITQH. The G3 stretch occupies residues 454-457; the sequence is DTPG. GTP-binding positions include 454 to 458 and 508 to 511; these read DTPGH and NKMD. A G4 region spans residues 508-511; it reads NKMD. A G5 region spans residues 544 to 546; the sequence is SAH.

It belongs to the TRAFAC class translation factor GTPase superfamily. Classic translation factor GTPase family. IF-2 subfamily.

Its subcellular location is the cytoplasm. In terms of biological role, one of the essential components for the initiation of protein synthesis. Protects formylmethionyl-tRNA from spontaneous hydrolysis and promotes its binding to the 30S ribosomal subunits. Also involved in the hydrolysis of GTP during the formation of the 70S ribosomal complex. The chain is Translation initiation factor IF-2 from Acinetobacter baumannii (strain SDF).